A 585-amino-acid chain; its full sequence is Arginine--tRNA ligase (585 aa).

A 'HIGH' region motif is present at residues 131–141 (ANPTGPMHVGH).

It belongs to the class-I aminoacyl-tRNA synthetase family. Monomer.

The protein localises to the cytoplasm. It catalyses the reaction tRNA(Arg) + L-arginine + ATP = L-arginyl-tRNA(Arg) + AMP + diphosphate. The chain is Arginine--tRNA ligase from Rhizobium etli (strain CIAT 652).